The following is a 245-amino-acid chain: 14-3-3 protein theta (245 aa).

It belongs to the 14-3-3 family. Homodimer, and heterodimer with other family members.

It is found in the cytoplasm. Functionally, adapter protein implicated in the regulation of a large spectrum of both general and specialized signaling pathways. Binds to a large number of partners, usually by recognition of a phosphoserine or phosphothreonine motif. Binding generally results in the modulation of the activity of the binding partner. The sequence is that of 14-3-3 protein theta (YWHAQ) from Gallus gallus (Chicken).